A 321-amino-acid polypeptide reads, in one-letter code: Phosphate metabolism protein 8 (321 aa).

Belongs to the SSM1 family.

May be involved in phosphate metabolism. In Saccharomyces cerevisiae (strain ATCC 204508 / S288c) (Baker's yeast), this protein is Phosphate metabolism protein 8 (PHM8).